Reading from the N-terminus, the 425-residue chain is Xyloglucan O-acetyltransferase 2 (425 aa).

Topologically, residues 1-18 are cytoplasmic; the sequence is MGSPFKDHHTLHPSLVRK. A helical; Signal-anchor for type II membrane protein transmembrane segment spans residues 19–38; that stretch reads LIPWTFYAMVPLVLFRVYLY. Topologically, residues 39 to 425 are lumenal; the sequence is PYPLHHTTTT…KWEYASRREQ (387 aa). Intrachain disulfides connect C68-C118, C89-C154, C98-C398, and C313-C394. Residue N85 is glycosylated (N-linked (GlcNAc...) asparagine). Residues 141–143 carry the GDS motif motif; that stretch reads GDS. Residue S143 is the Nucleophile of the active site. 2 N-linked (GlcNAc...) asparagine glycosylation sites follow: N183 and N259. Residue D393 is the Proton donor of the active site. The DXXH motif signature appears at 393 to 396; sequence DCVH. H396 acts as the Proton acceptor in catalysis.

Belongs to the PC-esterase family. TBL subfamily.

Its subcellular location is the golgi apparatus membrane. In terms of biological role, xyloglucan acetyltransferase that catalyzes the acetylation of fucosylated Gal residues on xyloglucan side chains. Predominantly catalyze 6-O-monoacetylation of Gal residues in the Fuc-Gal-Xyl trisaccharide side chains of xyloglucan oligomers. This is Xyloglucan O-acetyltransferase 2 from Populus trichocarpa (Western balsam poplar).